Here is a 242-residue protein sequence, read N- to C-terminus: Sugar fermentation stimulation protein homolog (242 aa).

This sequence belongs to the SfsA family.

The protein is Sugar fermentation stimulation protein homolog of Nitratidesulfovibrio vulgaris (strain DP4) (Desulfovibrio vulgaris).